A 65-amino-acid chain; its full sequence is MKAQAVQKLDLAGCQAQLLVLLEEQFRLRMQHATGQLAKTSRLRTVRRDIARVRTAITVKKEAHS.

It belongs to the universal ribosomal protein uL29 family.

The sequence is that of Large ribosomal subunit protein uL29 from Acidithiobacillus ferrooxidans (strain ATCC 23270 / DSM 14882 / CIP 104768 / NCIMB 8455) (Ferrobacillus ferrooxidans (strain ATCC 23270)).